A 156-amino-acid chain; its full sequence is 6,7-dimethyl-8-ribityllumazine synthase (156 aa).

5-amino-6-(D-ribitylamino)uracil contacts are provided by residues Phe23, 57 to 59 (SWE), and 81 to 83 (AVV). 86 to 87 (ET) contributes to the (2S)-2-hydroxy-3-oxobutyl phosphate binding site. The Proton donor role is filled by His89. Phe114 is a binding site for 5-amino-6-(D-ribitylamino)uracil. Residue Arg128 participates in (2S)-2-hydroxy-3-oxobutyl phosphate binding.

Belongs to the DMRL synthase family.

It carries out the reaction (2S)-2-hydroxy-3-oxobutyl phosphate + 5-amino-6-(D-ribitylamino)uracil = 6,7-dimethyl-8-(1-D-ribityl)lumazine + phosphate + 2 H2O + H(+). The protein operates within cofactor biosynthesis; riboflavin biosynthesis; riboflavin from 2-hydroxy-3-oxobutyl phosphate and 5-amino-6-(D-ribitylamino)uracil: step 1/2. Functionally, catalyzes the formation of 6,7-dimethyl-8-ribityllumazine by condensation of 5-amino-6-(D-ribitylamino)uracil with 3,4-dihydroxy-2-butanone 4-phosphate. This is the penultimate step in the biosynthesis of riboflavin. This chain is 6,7-dimethyl-8-ribityllumazine synthase, found in Salinibacter ruber (strain DSM 13855 / M31).